We begin with the raw amino-acid sequence, 499 residues long: Guanosine-5'-triphosphate,3'-diphosphate pyrophosphatase (499 aa).

This sequence belongs to the GppA/Ppx family. GppA subfamily.

The catalysed reaction is guanosine 3'-diphosphate 5'-triphosphate + H2O = guanosine 3',5'-bis(diphosphate) + phosphate + H(+). The protein operates within purine metabolism; ppGpp biosynthesis; ppGpp from GTP: step 2/2. Its function is as follows. Catalyzes the conversion of pppGpp to ppGpp. Guanosine pentaphosphate (pppGpp) is a cytoplasmic signaling molecule which together with ppGpp controls the 'stringent response', an adaptive process that allows bacteria to respond to amino acid starvation, resulting in the coordinated regulation of numerous cellular activities. This chain is Guanosine-5'-triphosphate,3'-diphosphate pyrophosphatase, found in Klebsiella pneumoniae (strain 342).